The primary structure comprises 575 residues: Putative export ATP-binding/permease protein RBE_0492 (575 aa).

The ABC transmembrane type-1 domain maps to 20–303 (LIIVIISLLS…IFELLSEMHL (284 aa)). A run of 6 helical transmembrane segments spans residues 21–41 (IIVIISLLSVSLALLLIGNVF), 61–81 (ILYICLLIIILSIASFFRSYF), 135–155 (FLSFFIRNSVMLVGSIILMFF), 158–178 (FKLASIVIITIPLLLIPIIKF), 242–262 (ALFFAFSMAFIFLGVTLVIWI), and 277–297 (IISFIYYAIIAGFSSGGIFEL). The region spanning 336-571 (LEFKNVNFSY…SDLYRTIYKE (236 aa)) is the ABC transporter domain. 371–378 (GRSGSGKS) contributes to the ATP binding site.

This sequence belongs to the ABC transporter superfamily. In terms of assembly, homodimer.

The protein resides in the cell inner membrane. In terms of biological role, part of an ABC transporter complex. Transmembrane domains (TMD) form a pore in the inner membrane and the ATP-binding domain (NBD) is responsible for energy generation. The protein is Putative export ATP-binding/permease protein RBE_0492 of Rickettsia bellii (strain RML369-C).